A 166-amino-acid chain; its full sequence is Cyclin-dependent kinase 4 inhibitor D (166 aa).

N-acetylmethionine is present on Met-1. ANK repeat units follow at residues 41–69 (FGKT…SPNV), 73–102 (SGTS…DVNA), 106–135 (TGSL…LHHR), and 138–165 (SGLT…MMIP).

The protein belongs to the CDKN2 cyclin-dependent kinase inhibitor family. Interacts with CDK6.

It localises to the nucleus. It is found in the cytoplasm. Interacts strongly with CDK4 and CDK6 and inhibits them. The sequence is that of Cyclin-dependent kinase 4 inhibitor D (Cdkn2d) from Mus musculus (Mouse).